Here is a 322-residue protein sequence, read N- to C-terminus: Deoxyhypusine hydroxylase (322 aa).

4 HEAT-like PBS-type repeats span residues 76 to 102, 109 to 135, 234 to 260, and 267 to 293; these read LKHE…VMLD, VRHE…SRRE, FKHE…VLKR, and VRHE…HLQD. Fe cation-binding residues include H78, E79, H111, E112, H236, E237, H269, and E270.

It belongs to the deoxyhypusine hydroxylase family. Fe(2+) is required as a cofactor.

Its subcellular location is the cytoplasm. The protein localises to the nucleus. It carries out the reaction [eIF5A protein]-deoxyhypusine + AH2 + O2 = [eIF5A protein]-hypusine + A + H2O. It participates in protein modification; eIF5A hypusination. Its function is as follows. Catalyzes the hydroxylation of the N(6)-(4-aminobutyl)-L-lysine intermediate to form hypusine, an essential post-translational modification only found in mature eIF-5A factor. The chain is Deoxyhypusine hydroxylase from Eremothecium gossypii (strain ATCC 10895 / CBS 109.51 / FGSC 9923 / NRRL Y-1056) (Yeast).